Consider the following 466-residue polypeptide: UDP-N-acetylmuramoylalanine--D-glutamate ligase (466 aa).

127–133 is an ATP binding site; sequence GSNGKST.

This sequence belongs to the MurCDEF family.

The protein resides in the cytoplasm. The enzyme catalyses UDP-N-acetyl-alpha-D-muramoyl-L-alanine + D-glutamate + ATP = UDP-N-acetyl-alpha-D-muramoyl-L-alanyl-D-glutamate + ADP + phosphate + H(+). It participates in cell wall biogenesis; peptidoglycan biosynthesis. Its function is as follows. Cell wall formation. Catalyzes the addition of glutamate to the nucleotide precursor UDP-N-acetylmuramoyl-L-alanine (UMA). The chain is UDP-N-acetylmuramoylalanine--D-glutamate ligase from Ruegeria pomeroyi (strain ATCC 700808 / DSM 15171 / DSS-3) (Silicibacter pomeroyi).